The following is a 93-amino-acid chain: MPKSKVRKKNDFTVKPVSRTPVKVKVGPSSVWFVALFIGLMLIGLVWLMVFQLAAVGSQAPAALNWMAQLGPWNYAIAFAFMITGLLLTMRWH.

2 helical membrane-spanning segments follow: residues 31–51 (VWFV…LMVF) and 70–90 (LGPW…LLTM).

It belongs to the CrgA family.

The protein localises to the cell membrane. In terms of biological role, involved in cell division. The protein is Cell division protein CrgA of Mycobacterium marinum (strain ATCC BAA-535 / M).